A 235-amino-acid chain; its full sequence is Sugar fermentation stimulation protein homolog (235 aa).

It belongs to the SfsA family.

The polypeptide is Sugar fermentation stimulation protein homolog (Azotobacter vinelandii (strain DJ / ATCC BAA-1303)).